The primary structure comprises 368 residues: Histidinol dehydrogenase (368 aa).

The substrate site is built by threonine 197, glutamine 218, and histidine 221. Zn(2+) is bound by residues glutamine 218 and histidine 221. Residues glutamate 276 and histidine 277 each act as proton acceptor in the active site. Positions 277, 306, 358, and 363 each coordinate substrate. Residue aspartate 306 participates in Zn(2+) binding. Histidine 363 contacts Zn(2+).

This sequence belongs to the histidinol dehydrogenase family. The cofactor is Zn(2+).

It catalyses the reaction L-histidinol + 2 NAD(+) + H2O = L-histidine + 2 NADH + 3 H(+). It functions in the pathway amino-acid biosynthesis; L-histidine biosynthesis; L-histidine from 5-phospho-alpha-D-ribose 1-diphosphate: step 9/9. Functionally, catalyzes the sequential NAD-dependent oxidations of L-histidinol to L-histidinaldehyde and then to L-histidine. The protein is Histidinol dehydrogenase of Pyrobaculum aerophilum (strain ATCC 51768 / DSM 7523 / JCM 9630 / CIP 104966 / NBRC 100827 / IM2).